The sequence spans 131 residues: MKYFVVALALVAAFACIAESKPAESEHELAEVEEENELADLEDAVWLEHLADLSDLEEARGFFGNTWKKIKGKADKIMLKKAVKIMVKKEGISKEEAQAKVDAMSKKQIRLYLLKHYGKKLFKKRPKNCDQ.

The first 20 residues, 1–20 (MKYFVVALALVAAFACIAES), serve as a signal peptide directing secretion. Residues 21 to 60 (KPAESEHELAEVEEENELADLEDAVWLEHLADLSDLEEAR) constitute a propeptide that is removed on maturation.

This sequence belongs to the cationic peptide 06 (cytoinsectotoxin) family. As to expression, expressed by the venom gland.

It is found in the secreted. Its function is as follows. Insecticidal, cytolytic and antimicrobial peptide. Forms voltage-dependent, ion-permeable channels in membranes. At high concentration causes cell membrane lysis. The sequence is that of M-zodatoxin-Lt8m (cit 1-13) from Lachesana tarabaevi (Spider).